The following is a 146-amino-acid chain: Hemoglobin subunit beta (146 aa).

Position 1 is an N-acetylvaline (Val1). The 145-residue stretch at His2–His146 folds into the Globin domain. Thr12 carries the phosphothreonine modification. An N6-acetyllysine modification is found at Lys59. His63 contacts heme b. Lys82 is modified (N6-acetyllysine). His92 is a binding site for heme b. Cys93 carries the S-nitrosocysteine modification. Lys144 bears the N6-acetyllysine mark.

Belongs to the globin family. As to quaternary structure, heterotetramer of two alpha chains and two beta chains. In terms of tissue distribution, red blood cells.

Involved in oxygen transport from the lung to the various peripheral tissues. The protein is Hemoglobin subunit beta (HBB) of Osphranter rufus (Red kangaroo).